Here is a 298-residue protein sequence, read N- to C-terminus: Tyrosine recombinase XerC (298 aa).

Positions 1–84 (MNHIQEAFLN…TLRTLYEYWM (84 aa)) constitute a Core-binding (CB) domain. The Tyr recombinase domain maps to 105 to 286 (YLPQFSLEEE…SNQQLRKVYL (182 aa)). Active-site residues include Arg-145, Lys-169, His-238, Arg-241, and His-264. The active-site O-(3'-phospho-DNA)-tyrosine intermediate is the Tyr-273.

It belongs to the 'phage' integrase family. XerC subfamily. As to quaternary structure, forms a cyclic heterotetrameric complex composed of two molecules of XerC and two molecules of XerD.

The protein localises to the cytoplasm. Its function is as follows. Site-specific tyrosine recombinase, which acts by catalyzing the cutting and rejoining of the recombining DNA molecules. The XerC-XerD complex is essential to convert dimers of the bacterial chromosome into monomers to permit their segregation at cell division. It also contributes to the segregational stability of plasmids. The protein is Tyrosine recombinase XerC of Staphylococcus aureus.